We begin with the raw amino-acid sequence, 436 residues long: Methanethiol oxidase (436 aa).

The first 24 residues, 1-24 (MKRREFGALAAGALAMGLPFRAFA), serve as a signal peptide directing secretion.

Belongs to the selenium-binding protein family.

Its subcellular location is the periplasm. The catalysed reaction is methanethiol + O2 + H2O = hydrogen sulfide + formaldehyde + H2O2 + H(+). The protein operates within organosulfur degradation. Functionally, catalyzes the oxidation of methanethiol. The chain is Methanethiol oxidase from Ruegeria pomeroyi (strain ATCC 700808 / DSM 15171 / DSS-3) (Silicibacter pomeroyi).